The sequence spans 277 residues: S-formylglutathione hydrolase FrmB (277 aa).

Residues S145, D221, and H254 each act as charge relay system in the active site.

This sequence belongs to the esterase D family.

The enzyme catalyses S-formylglutathione + H2O = formate + glutathione + H(+). Serine hydrolase involved in the detoxification of formaldehyde. Hydrolyzes S-formylglutathione to glutathione and formate. This is S-formylglutathione hydrolase FrmB (frmB) from Escherichia coli (strain K12 / DH10B).